A 49-amino-acid polypeptide reads, in one-letter code: Large ribosomal subunit protein bL33B (49 aa).

The protein belongs to the bacterial ribosomal protein bL33 family.

This is Large ribosomal subunit protein bL33B from Limosilactobacillus reuteri subsp. reuteri (strain JCM 1112) (Lactobacillus reuteri).